We begin with the raw amino-acid sequence, 145 residues long: MSLLKTLAPKAGSKHAPKRIGRGIGSGMGGTATKGHKGQLARTGGTVRRGFEGGQTPLHRRLPKFGFSNVAFANNFEIVNVGQLAKFSGEVTPESLHAAGLISKGAVKILGNGELKTALTVKAHKFSESAKKAIEAAGGKVEVIK.

The interval 1–55 (MSLLKTLAPKAGSKHAPKRIGRGIGSGMGGTATKGHKGQLARTGGTVRRGFEGGQ) is disordered. Over residues 12–21 (GSKHAPKRIG) the composition is skewed to basic residues. The segment covering 22 to 32 (RGIGSGMGGTA) has biased composition (gly residues).

This sequence belongs to the universal ribosomal protein uL15 family. In terms of assembly, part of the 50S ribosomal subunit.

In terms of biological role, binds to the 23S rRNA. This chain is Large ribosomal subunit protein uL15, found in Bdellovibrio bacteriovorus (strain ATCC 15356 / DSM 50701 / NCIMB 9529 / HD100).